The sequence spans 368 residues: Transmembrane protein 26 (368 aa).

The next 3 membrane-spanning stretches (helical) occupy residues 4 to 24, 36 to 56, and 65 to 85; these read LVFLNALATRLLFLLHSLVGV, YWLLALLNLLLFLETALTLKF, and FSPAIFLYLISIVPSLWLLEL. A glycan (N-linked (GlcNAc...) asparagine) is linked at Asn110. The next 5 helical transmembrane spans lie at 150–170, 177–197, 208–228, 257–277, and 281–301; these read QTFLLMLIIGRWLLPIGGGIT, LLLMFVGTAADILEFTSETLE, VYAILVIWTWSMLQFPLDLAV, IGISVFIQDGPFLVVRLILMT, and VINQMLVFFAAKNFLVVVLQL. Residues 324–368 are disordered; the sequence is GEHGCRAQTSESGPSQRDWQNESKEGLAIPLRGSPVTSDDSHHTP. The span at 330 to 341 shows a compositional bias: polar residues; sequence AQTSESGPSQRD.

The protein resides in the membrane. The sequence is that of Transmembrane protein 26 (TMEM26) from Homo sapiens (Human).